A 423-amino-acid chain; its full sequence is Elongation factor 1-alpha (423 aa).

In terms of domain architecture, tr-type G spans 5–221 (KEHINVAFIG…DLLKPPEKLV (217 aa)). Residues 14–21 (GHVDHGKS) form a G1 region. 14–21 (GHVDHGKS) lines the GTP pocket. A Mg(2+)-binding site is contributed by Ser-21. The interval 70 to 74 (GVTID) is G2. Residues 91–94 (DCPG) form a G3 region. GTP-binding positions include 91-95 (DCPGH) and 146-149 (NKMD). Positions 146–149 (NKMD) are G4. The G5 stretch occupies residues 185-187 (SAY).

It belongs to the TRAFAC class translation factor GTPase superfamily. Classic translation factor GTPase family. EF-Tu/EF-1A subfamily.

The protein localises to the cytoplasm. The enzyme catalyses GTP + H2O = GDP + phosphate + H(+). Functionally, GTP hydrolase that promotes the GTP-dependent binding of aminoacyl-tRNA to the A-site of ribosomes during protein biosynthesis. The chain is Elongation factor 1-alpha from Archaeoglobus fulgidus (strain ATCC 49558 / DSM 4304 / JCM 9628 / NBRC 100126 / VC-16).